Here is a 171-residue protein sequence, read N- to C-terminus: MANPKVFFDLTIGGAPAGRVVMELFADTTPKTAENFRALCTGEKGVGKMGKPLHYKGSTFHRVIPGFMCQGGDFTAGNGTGGESIYGAKFNDENFVKKHTGPGILSMANAGPGTNGSQFFICTAKTEWLNGKHVVFGQVVEGMDVIKKAEAVGSSSGRCSKPVVIADCGQL.

The region spanning 7 to 170 (FFDLTIGGAP…KPVVIADCGQ (164 aa)) is the PPIase cyclophilin-type domain.

The protein belongs to the cyclophilin-type PPIase family. Expressed in leaves, floral buds, growing shoots and stamens at anthesis.

The protein localises to the cytoplasm. The catalysed reaction is [protein]-peptidylproline (omega=180) = [protein]-peptidylproline (omega=0). Binds cyclosporin A (CsA). CsA mediates some of its effects via an inhibitory action on PPIase. PPIases accelerate the folding of proteins. It catalyzes the cis-trans isomerization of proline imidic peptide bonds in oligopeptides. The polypeptide is Peptidyl-prolyl cis-trans isomerase (Solanum lycopersicum (Tomato)).